The following is a 432-amino-acid chain: Short/branched chain specific acyl-CoA dehydrogenase, mitochondrial (432 aa).

The transit peptide at 1-33 (MAVSAFQLWRAGGLLRRNFLTHSSSWKIPPRVL) directs the protein to the mitochondrion. Residue K70 is modified to N6-acetyllysine; alternate. K70 is subject to N6-succinyllysine; alternate. FAD-binding positions include 174-183 (FCLSEAGAGS) and 207-209 (WIS). Residue S183 participates in substrate binding. S183 is subject to Phosphoserine. Y229 serves as a coordination point for substrate. N6-succinyllysine is present on K278. Y283 serves as a coordination point for substrate. N6-acetyllysine; alternate is present on K284. K284 carries the N6-succinyllysine; alternate modification. Residue 291-294 (NEGR) coordinates substrate. FAD is bound by residues R319, Q330, and 387–391 (EWMGG). E414 (proton acceptor) is an active-site residue. FAD is bound at residue 416 to 418 (TSN). At K426 the chain carries N6-acetyllysine.

Belongs to the acyl-CoA dehydrogenase family. As to quaternary structure, homotetramer. FAD is required as a cofactor. In terms of tissue distribution, ubiquitously expressed.

It localises to the mitochondrion matrix. The catalysed reaction is 2-methylbutanoyl-CoA + oxidized [electron-transfer flavoprotein] + H(+) = (2E)-2-methylbut-2-enoyl-CoA + reduced [electron-transfer flavoprotein]. It carries out the reaction (2S)-2-methylbutanoyl-CoA + oxidized [electron-transfer flavoprotein] + H(+) = (2E)-2-methylbut-2-enoyl-CoA + reduced [electron-transfer flavoprotein]. It catalyses the reaction (2R)-2-methylbutanoyl-CoA + oxidized [electron-transfer flavoprotein] + H(+) = ethylacryloyl-CoA + reduced [electron-transfer flavoprotein]. The enzyme catalyses butanoyl-CoA + oxidized [electron-transfer flavoprotein] + H(+) = (2E)-butenoyl-CoA + reduced [electron-transfer flavoprotein]. The catalysed reaction is 2-methylpropanoyl-CoA + oxidized [electron-transfer flavoprotein] + H(+) = 2-methylpropenoyl-CoA + reduced [electron-transfer flavoprotein]. It carries out the reaction hexanoyl-CoA + oxidized [electron-transfer flavoprotein] + H(+) = (2E)-hexenoyl-CoA + reduced [electron-transfer flavoprotein]. It catalyses the reaction valproyl-CoA + oxidized [electron-transfer flavoprotein] + H(+) = (2E)-2-propylpent-2-enoyl-CoA + reduced [electron-transfer flavoprotein]. The protein operates within lipid metabolism; mitochondrial fatty acid beta-oxidation. Its pathway is amino-acid degradation; L-isoleucine degradation. Its activity is regulated as follows. Inhibited by N-ethylmaleimide, hydroxymercuribenzoate, methyl mercury iodide and heavy metals such as Hg2+, Cu2+, and Ag2+. Short and branched chain specific acyl-CoA dehydrogenase that catalyzes the removal of one hydrogen from C-2 and C-3 of the fatty acyl-CoA thioester, resulting in the formation of trans-2-enoyl-CoA. Among the different mitochondrial acyl-CoA dehydrogenases, acts specifically on short and branched chain acyl-CoA derivatives such as (S)-2-methylbutyryl-CoA as well as short straight chain acyl-CoAs such as butyryl-CoA. Plays an important role in the metabolism of L-isoleucine by catalyzing the dehydrogenation of 2-methylbutyryl-CoA, one of the steps of the L-isoleucine catabolic pathway. Can also act on valproyl-CoA, a metabolite of the valproic acid drug. The protein is Short/branched chain specific acyl-CoA dehydrogenase, mitochondrial of Rattus norvegicus (Rat).